Reading from the N-terminus, the 194-residue chain is Cytochrome c biogenesis ATP-binding export protein CcmA (194 aa).

The region spanning 5–194 (LALDGVACIR…LDELVMGVLA (190 aa)) is the ABC transporter domain. 37–44 (GPNGAGKS) lines the ATP pocket.

It belongs to the ABC transporter superfamily. CcmA exporter (TC 3.A.1.107) family. In terms of assembly, the complex is composed of two ATP-binding proteins (CcmA) and two transmembrane proteins (CcmB).

It is found in the cell inner membrane. The catalysed reaction is heme b(in) + ATP + H2O = heme b(out) + ADP + phosphate + H(+). In terms of biological role, part of the ABC transporter complex CcmAB involved in the biogenesis of c-type cytochromes; once thought to export heme, this seems not to be the case, but its exact role is uncertain. Responsible for energy coupling to the transport system. This chain is Cytochrome c biogenesis ATP-binding export protein CcmA, found in Sphingopyxis alaskensis (strain DSM 13593 / LMG 18877 / RB2256) (Sphingomonas alaskensis).